The chain runs to 738 residues: Probable trehalase (738 aa).

The disordered stretch occupies residues 1-44 (MLQGMPKRSGSISELHDPFSSPDVYYGPATDPRRQKQPNKYSRT). Residues Arg-289, 296 to 297 (WD), Asn-333, Arg-342, 342 to 344 (RSQ), and Gly-463 contribute to the substrate site. Active-site proton donor/acceptor residues include Asp-465 and Glu-660.

The protein belongs to the glycosyl hydrolase 37 family.

It carries out the reaction alpha,alpha-trehalose + H2O = alpha-D-glucose + beta-D-glucose. The polypeptide is Probable trehalase (NTH2) (Eremothecium gossypii (strain ATCC 10895 / CBS 109.51 / FGSC 9923 / NRRL Y-1056) (Yeast)).